The sequence spans 376 residues: Succinyl-diaminopimelate desuccinylase (376 aa).

His-74 serves as a coordination point for Zn(2+). The active site involves Asp-76. Asp-105 contacts Zn(2+). Glu-135 serves as the catalytic Proton acceptor. The Zn(2+) site is built by Glu-136, Glu-164, and His-349.

It belongs to the peptidase M20A family. DapE subfamily. In terms of assembly, homodimer. Zn(2+) serves as cofactor. It depends on Co(2+) as a cofactor.

The enzyme catalyses N-succinyl-(2S,6S)-2,6-diaminopimelate + H2O = (2S,6S)-2,6-diaminopimelate + succinate. It functions in the pathway amino-acid biosynthesis; L-lysine biosynthesis via DAP pathway; LL-2,6-diaminopimelate from (S)-tetrahydrodipicolinate (succinylase route): step 3/3. Catalyzes the hydrolysis of N-succinyl-L,L-diaminopimelic acid (SDAP), forming succinate and LL-2,6-diaminopimelate (DAP), an intermediate involved in the bacterial biosynthesis of lysine and meso-diaminopimelic acid, an essential component of bacterial cell walls. In Zymomonas mobilis subsp. mobilis (strain ATCC 31821 / ZM4 / CP4), this protein is Succinyl-diaminopimelate desuccinylase.